The chain runs to 571 residues: Cytochrome P450 monooxygenase g430 (571 aa).

The chain crosses the membrane as a helical span at residues 8-28 (GALIWVVTSYILYAIISNFII). A heme-binding site is contributed by C471. Residues 552 to 571 (CPLPAEAKLPKSRKPIGTAS) form a disordered region.

Belongs to the cytochrome P450 family. Heme is required as a cofactor.

It localises to the membrane. Its pathway is mycotoxin biosynthesis. Cytochrome P450 monooxygenase; part of the gene cluster that mediates the biosynthesis of 1233A, a natural compound known as an inhibitor of HMG-CoA synthase in the mevalonate pathway and with antibacterial and antifungal activities. The highly reducing polyketide synthase g433 is responsible for the 1233A backbone biosynthesis and the cytochrome P450 monooxygenase g430 catalyzes oxidation of the backbone. This is Cytochrome P450 monooxygenase g430 from Fusarium sp.